A 443-amino-acid polypeptide reads, in one-letter code: MARIPLEFLSITLPVLLLAYCLAIEYEVSLPTIAHTSPASNPEEYLQSIYEQLNLDLPSTCTVNHLSAFDNTPTSLLNFSTSPVEHFDAPKLPSGLNATAGEQWAFDGTSSSGRSGLLLGIYRDASYAFLGPGNFRLSLDLVWDNSTTWSTVDYLSSSTVHTCTDKVVGIWSHSADHYYVFTVTADAKHARIHFHTPDVVGAVDLYSTTPARYPDGALFPSEVSVTQNAPMLHWVEPIPGGLIDVDLKVKDTPFRWTGLGGHERWWSAKGWLDLMTHWEAVRLMAGPYVLSFWQPTSRVNGVAYPSAFLTKYGEKVFSAVSGKVSEVEDYILYSPVRMEKQARETGYEVELVSPAQGRRWVFGLEYRNQEFEFELGDAAGGRAYVGRAKGGEVHADDKPEEPSEGVFFIEHVDVKALTVPRAYVVVSFEFGPPIHGADIWVAC.

The first 23 residues, 1–23 (MARIPLEFLSITLPVLLLAYCLA), serve as a signal peptide directing secretion. N-linked (GlcNAc...) asparagine glycosylation is found at Asn78, Asn97, and Asn145.

Belongs to the Diels-Alderase family.

Its pathway is secondary metabolite biosynthesis. In terms of biological role, diels-Alderase; part of the gene cluster that mediates the biosynthesis of oxaleimides, cytotoxic compounds containing an unusual disubstituted succinimide moiety. The first step of the pathway is provided by the HR-PKS poxF that serves in a new mode of collaborative biosynthesis with the PKS-NRPS poxE, by providing the olefin containing amino acid substrate via the synthesis of an ACP-bound dec-4-enoate. The cytochrome P450 monooxygenase poxM-catalyzed oxidation at the alpha-position creates the enzyme-bound 2-hydroxydec-4-enoyl-ACP thioester, which may be prone to spontaneous hydrolysis to yield 2-hydroxydec-4-enoic acid due to increased electrophilicity of the carbonyl. 2-hydroxydec-4-enoic acid can then be further oxidized by poxM to yield the alpha-ketoacid 2-oxodec-4-enoicacid, which is reductively aminated by the aminotransferase poxL to yield (S,E)-2-aminodec-4-enoic acid. The Hybrid PKS-NRPS synthetase poxE then performs condensation between the octaketide product of its PKS modules and the amino group of (S,E)-2-aminodec-4-enoic acid which is activated and incorporated by the adenylation domain. The resulting aminoacyl product can be cyclized by the Diels-Alderase PoxQ and reductively released by the reductive (R) domain of poxE to yield an aldehyde intermediate. The released aldehyde is then substrate for a Knoevenagel condensation by the hydrolyase poxO followed by an oxidation at the 5-position of the pyrrolidone ring. The presence of the olefin from the amino acid building block allows for migration of the substituted allyl group to occur. This allylic transposition reaction takes place in a conjugate addition, semipinacol-like fashion to yield a succinimide intermediate. Iterative two-electron oxidations of the C7 methyl of the succinimide intermediate to the carboxylic acid can be catalyzed by one of two remaining cytochrome P450 monooxygenasess poxC or poxD to yield oxaleimide A. Subsequent oxidation yields the maleimide scaffold oxaleimide I. Both oxaleimide A and oxaleimide I can undergo oxidative modifications in the decalin ring to yield the series of products oxaleimides B to H. The chain is Diels-Alderase poxQ from Penicillium oxalicum (strain 114-2 / CGMCC 5302) (Penicillium decumbens).